Reading from the N-terminus, the 199-residue chain is Large ribosomal subunit protein bL9 (199 aa).

A disordered region spans residues T169 to A199.

Belongs to the bacterial ribosomal protein bL9 family.

In terms of biological role, binds to the 23S rRNA. In Novosphingobium aromaticivorans (strain ATCC 700278 / DSM 12444 / CCUG 56034 / CIP 105152 / NBRC 16084 / F199), this protein is Large ribosomal subunit protein bL9.